A 310-amino-acid polypeptide reads, in one-letter code: Olfactory receptor 5P56 (310 aa).

Over 1 to 25 the chain is Extracellular; sequence MEAQNHTTVKEFILLGLTENSTLRV. Residues Asn-5 and Asn-20 are each glycosylated (N-linked (GlcNAc...) asparagine). A helical transmembrane segment spans residues 26-46; sequence ILFMIFLGIYTVTLVGNFSII. Over 47–54 the chain is Cytoplasmic; sequence SLIRSCPQ. Residues 55-75 traverse the membrane as a helical segment; the sequence is LHTPMYLFLSHLALVDIGFST. The Extracellular segment spans residues 76–99; that stretch reads SITPIMLTGFLGHTVTLSVAACVA. Cys-97 and Cys-189 are oxidised to a cystine. The helical transmembrane segment at 100–120 threads the bilayer; it reads QFCIAVTFGTVECFLLAVMAY. Residues 121-133 lie on the Cytoplasmic side of the membrane; sequence DRYVAICSPLLYS. A helical transmembrane segment spans residues 134–154; sequence THMSPRICFLLVGASYVGGCV. The Extracellular portion of the chain corresponds to 155–196; that stretch reads NSGTFTSCLLILSFCGPNQIDHFFCDFPAVLKLSCSDVSIIG. Residues 197–217 traverse the membrane as a helical segment; that stretch reads IIPSISAGSIIVITVFVIAVS. At 218-237 the chain is on the cytoplasmic side; the sequence is YTYILITILNMRSTEGRHKA. Residues 238–258 form a helical membrane-spanning segment; sequence FSTCTSHLTAVTLYYGTITFI. Residues 259–271 lie on the Extracellular side of the membrane; that stretch reads YVMPKSNYSTAQN. The N-linked (GlcNAc...) asparagine glycan is linked to Asn-265. Residues 272-292 form a helical membrane-spanning segment; that stretch reads KILSVFYTVVIPMLNPLIYSL. At 293-310 the chain is on the cytoplasmic side; sequence RNRDVKEALRKAIIRIFP.

It belongs to the G-protein coupled receptor 1 family.

It localises to the cell membrane. In terms of biological role, potential odorant receptor. This chain is Olfactory receptor 5P56, found in Mus musculus (Mouse).